The following is a 342-amino-acid chain: Alpha-(1,3)-fucosyltransferase 7 (342 aa).

Residues 1–11 (MQNAGLSPTPS) are Cytoplasmic-facing. A helical; Signal-anchor for type II membrane protein transmembrane segment spans residues 12–31 (LRALGGLAMAALLSTVWLWW). Residues 32 to 342 (RLGAAPGGAP…YQDLEGWFQA (311 aa)) are Extracellular-facing. A disulfide bridge connects residues C68 and C76. N81 carries an N-linked (GlcNAc...) asparagine glycan. A disulfide bridge connects residues C211 and C214. N-linked (GlcNAc...) asparagine glycosylation is present at N291. An intrachain disulfide couples C318 to C321.

Belongs to the glycosyltransferase 10 family. Post-translationally, N-glycosylated. In terms of tissue distribution, expressed in thymus, spleen, liver and lung. Highly expressed in the thymus and lower expressed in the lung.

Its subcellular location is the membrane. It catalyses the reaction an N-acetyl-alpha-neuraminyl-(2-&gt;3)-beta-D-galactosyl-(1-&gt;4)-N-acetyl-beta-D-glucosaminyl derivative + GDP-beta-L-fucose = an alpha-Neu5Ac-(2-&gt;3)-beta-D-Gal-(1-&gt;4)-[alpha-L-Fuc-(1-&gt;3)]-beta-D-GlcNAc derivative + GDP + H(+). The enzyme catalyses a neolactoside IV(3)-alpha-NeuAc-nLc4Cer + GDP-beta-L-fucose = a neolactoside IV(3)-alpha-NeuNAc,III(3)-alpha-Fuc-nLc4Cer + GDP + H(+). It carries out the reaction a neolactoside VI(3)-alpha-NeuNAc-nLc6Cer + GDP-beta-L-fucose = a neolactoside VI(3)-alpha-NeuAc,V(3)-alphaFuc-nLc6Cer + GDP + H(+). The catalysed reaction is an alpha-Neu5Ac-(2-&gt;3)-beta-D-Gal-(1-&gt;4)-beta-D-GlcNAc-(1-&gt;3)-beta-D-Gal-(1-&gt;4)-[alpha-L-Fuc-(1-&gt;3)]-beta-D-GlcNAc derivative + GDP-beta-L-fucose = an alpha-Neu5Ac-(2-&gt;3)-beta-D-Gal-(1-&gt;4)-[alpha-L-Fuc-(1-&gt;3)]-beta-D-GlcNAc-(1-&gt;3)-beta-D-Gal-(1-&gt;4)-[alpha-L-Fuc-(1-&gt;3)]-beta-D-GlcNAc derivative + GDP + H(+). It catalyses the reaction an alpha-Neu5Ac-(2-&gt;3)-beta-D-Gal-(1-&gt;4)-beta-D-GlcNAc6S derivative + GDP-beta-L-fucose = an alpha-Neu5Ac-(2-&gt;3)-beta-D-Gal-(1-&gt;4)-[alpha-L-Fuc-(1-&gt;3)]-beta-D-GlcNAc6S derivative + GDP + H(+). The enzyme catalyses alpha-Neu5Ac-(2-&gt;3)-beta-D-Gal-(1-&gt;4)-beta-D-GlcNAc-(1-&gt;3)-beta-D-Gal-(1-&gt;4)-D-Glc + GDP-beta-L-fucose = alpha-Neu5Ac-(2-&gt;3)-beta-D-Gal-(1-&gt;4)-[alpha-L-Fuc-(1-&gt;3)]-beta-D-GlcNAc-(1-&gt;3)-beta-D-Gal-(1-&gt;4)-D-Glc + GDP + H(+). It carries out the reaction alpha-Neu5Ac-(2-&gt;3)-beta-D-Gal-(1-&gt;4)-beta-D-GlcNAc-(1-&gt;3)-beta-D-Gal-(1-&gt;4)-[alpha-L-Fuc-(1-&gt;3)]-beta-D-GlcNAc-(1-&gt;3)-beta-D-Gal-(1-&gt;4)-beta-D-GlcNAc + GDP-beta-L-fucose = alpha-Neu5Ac-(2-&gt;3)-beta-D-Gal-(1-&gt;4)-[alpha-L-Fuc-(1-&gt;3)]-beta-D-GlcNAc-(1-&gt;3)-beta-D-Gal-(1-&gt;4)-[alpha-L-Fuc-(1-&gt;3)]-beta-D-GlcNAc-(1-&gt;3)-beta-D-Gal-(1-&gt;4)-beta-D-GlcNAc + GDP + H(+). The catalysed reaction is alpha-Neu5Ac-(2-&gt;3)-beta-D-Gal-(1-&gt;4)-beta-D-GlcNAc-(1-&gt;3)-beta-D-Gal-(1-&gt;4)-beta-D-GlcNAc-(1-&gt;3)-beta-D-Gal-(1-&gt;4)-beta-D-GlcNAc + GDP-beta-L-fucose = alpha-Neu5Ac-(2-&gt;3)-beta-D-Gal-(1-&gt;4)-[alpha-L-Fuc-(1-&gt;3)]-beta-D-GlcNAc-(1-&gt;3)-beta-D-Gal-(1-&gt;4)-beta-D-GlcNAc-(1-&gt;3)-beta-D-Gal-(1-&gt;4)-beta-D-GlcNAc + GDP + H(+). It functions in the pathway protein modification; protein glycosylation. Its activity is regulated as follows. Inhibited by NaCl. Inhibited by GDP in a concentration dependent manner, with an IC(50) value of 93 uM. Also inhibited by GMP and GTP. Inhibited by N-ethylmaleimide. Activated by poly(ethylene glycol) by enhancing the thermal stability of FUT7. Activated by Mn2+, Ca2+, and Mg2+. Both panosialin A and B inhibit activity with IC(50) values of 4.8 and 5.3 ug/ml, respectively. Inhibited by gallic acid (GA) and (-)-epigallocatechin gallate (EGCG) in a time-dependent and irreversible manner with IC(50) values of 60 and 700 nM, respectively. Catalyzes the transfer of L-fucose, from a guanosine diphosphate-beta-L-fucose, to the N-acetyl glucosamine (GlcNAc) of a distal alpha2,3 sialylated lactosamine unit of a glycoprotein or a glycolipid-linked sialopolylactosamines chain through an alpha-1,3 glycosidic linkage and participates in the final fucosylation step in the biosynthesis of the sialyl Lewis X (sLe(x)), a carbohydrate involved in cell and matrix adhesion during leukocyte trafficking and fertilization. In vitro, also synthesizes sialyl-dimeric-Lex structures, from VIM-2 structures and both di-fucosylated and trifucosylated structures from mono-fucosylated precursors. However does not catalyze alpha 1-3 fucosylation when an internal alpha 1-3 fucosylation is present in polylactosamine chain and the fucosylation rate of the internal GlcNAc residues is reduced once fucose has been added to the distal GlcNAc. Also catalyzes the transfer of a fucose from GDP-beta-fucose to the 6-sulfated a(2,3)sialylated substrate to produce 6-sulfo sLex mediating significant L-selectin-dependent cell adhesion. Through sialyl-Lewis(x) biosynthesis, can control SELE- and SELP-mediated cell adhesion with leukocytes and allows leukocytes tethering and rolling along the endothelial tissue thereby enabling the leukocytes to accumulate at a site of inflammation. May enhance embryo implantation through sialyl Lewis X (sLeX)-mediated adhesion of embryo cells to endometrium. May affect insulin signaling by up-regulating the phosphorylation and expression of some signaling molecules involved in the insulin-signaling pathway through SLe(x) which is present on the glycans of the INSRR alpha subunit. The protein is Alpha-(1,3)-fucosyltransferase 7 of Bos taurus (Bovine).